A 368-amino-acid polypeptide reads, in one-letter code: MNTFGREFRITTFGESHGKAVGVVIDGVPAGLPLSEEDIKRELERRMFCHIHWLNPRCEPEEFEILSGVKNGHTQGTPIAIVIWNKRAISSYYDELWMKPRPGHADLAYYLKYGKFYDHRGGGRASGRTTAAIVAAGAVAKKLLSQLGVDVCGHIIELGGIEVRRSYTFEEVKSSWAKPLPVVDDEALAAMLETLRKNAAEGDSVGGGVEIWAVGVPPGLGEPHFGKIKAELAMAAFSIPAVVALDWGAGRALAKMRGSEANDPIIIKSGRPALESNKIGGVLGGITVGEPIYFRVWFKPTPSVRKPQRTVDLAKMEPAVLEFKGRYDVSVVPKALVALEAMTAITLADHALRAGLVRRDRPLRDPVV.

Arg-46 contacts NADP(+). Residues 124 to 126, Gly-284, 299 to 303, and Arg-326 each bind FMN; these read RAS and KPTPS.

This sequence belongs to the chorismate synthase family. FMNH2 serves as cofactor.

It catalyses the reaction 5-O-(1-carboxyvinyl)-3-phosphoshikimate = chorismate + phosphate. It participates in metabolic intermediate biosynthesis; chorismate biosynthesis; chorismate from D-erythrose 4-phosphate and phosphoenolpyruvate: step 7/7. Its function is as follows. Catalyzes the anti-1,4-elimination of the C-3 phosphate and the C-6 proR hydrogen from 5-enolpyruvylshikimate-3-phosphate (EPSP) to yield chorismate, which is the branch point compound that serves as the starting substrate for the three terminal pathways of aromatic amino acid biosynthesis. This reaction introduces a second double bond into the aromatic ring system. This Pyrobaculum aerophilum (strain ATCC 51768 / DSM 7523 / JCM 9630 / CIP 104966 / NBRC 100827 / IM2) protein is Chorismate synthase.